Reading from the N-terminus, the 833-residue chain is Leucine--tRNA ligase (833 aa).

Positions 41-52 (PYPSGAGLHVGH) match the 'HIGH' region motif. The 'KMSKS' region motif lies at 610–614 (KMSKS). Residue Lys613 participates in ATP binding.

This sequence belongs to the class-I aminoacyl-tRNA synthetase family.

The protein localises to the cytoplasm. The enzyme catalyses tRNA(Leu) + L-leucine + ATP = L-leucyl-tRNA(Leu) + AMP + diphosphate. In Streptococcus thermophilus (strain CNRZ 1066), this protein is Leucine--tRNA ligase.